The chain runs to 406 residues: E3 ubiquitin-protein ligase RING1 (406 aa).

A Phosphothreonine modification is found at Thr24. The tract at residues 30-234 is necessary for transcriptional repression; the sequence is MDGTEIAVSP…GGAGSEDSGD (205 aa). Ser38 carries the post-translational modification Phosphoserine. Residues 48-88 form an RING-type zinc finger; sequence CPICLDMLKNTMTTKECLHRFCSDCIVTALRSGNKECPTCR. Phosphoserine occurs at positions 140, 187, and 190. 2 disordered regions span residues 151–263 and 309–354; these read HRAQ…GEIE and QQQE…PSLE. The span at 175 to 187 shows a compositional bias: acidic residues; the sequence is EPGEGEGDGEDIS. The Nuclear localization signal motif lies at 201–204; it reads KRPR. A compositionally biased stretch (gly residues) spans 205-228; sequence GGGAGGSSVGTGGGAAGGACGGAG. Position 215 is a phosphothreonine (Thr215). 2 positions are modified to phosphoserine: Ser229 and Ser232. Residues 230–406 form a necessary for interaction with CBX2 region; it reads EDSGDRGGTL…LCYAPTKDPK (177 aa). Over residues 235–244 the composition is skewed to gly residues; that stretch reads RGGTLGGGTL. Positions 246-258 are enriched in pro residues; that stretch reads PPSPPGAPSPPEP. Phosphoserine occurs at positions 248 and 254. Over residues 317–343 the composition is skewed to gly residues; sequence GGPGGGASDTGGPDGGGGERGVSGGGE.

In terms of assembly, component of chromatin-associated Polycomb (PcG) complexes. Part of the E2F6.com-1 complex in G0 phase composed of E2F6, MGA, MAX, TFDP1, CBX3, BAT8, EUHMTASE1, RING1, RNF2/RING2 MBLR, L3MBTL2 and YAF2. Interacts with CBX2 and PCGF6. Component of a PRC1-like complex. Component of repressive BCOR complex containing Polycomb group subcomplex at least composed of RYBP, PCGF1, BCOR and RNF2/RING2. Interacts with BMI1, PHC2, PCGF2, RNF2; CBX6, CBX7 and CBX8. Interacts with MN1. Interacts with USP26.

It localises to the nucleus speckle. The catalysed reaction is S-ubiquitinyl-[E2 ubiquitin-conjugating enzyme]-L-cysteine + [acceptor protein]-L-lysine = [E2 ubiquitin-conjugating enzyme]-L-cysteine + N(6)-ubiquitinyl-[acceptor protein]-L-lysine.. The protein operates within protein modification; protein ubiquitination. Constitutes one of the E3 ubiquitin-protein ligases that mediate monoubiquitination of 'Lys-119' of histone H2A, thereby playing a central role in histone code and gene regulation. H2A 'Lys-119' ubiquitination gives a specific tag for epigenetic transcriptional repression and participates in X chromosome inactivation of female mammals. Essential component of a Polycomb group (PcG) multiprotein PRC1-like complex, a complex class required to maintain the transcriptionally repressive state of many genes, including Hox genes, throughout development. PcG PRC1 complex acts via chromatin remodeling and modification of histones, rendering chromatin heritably changed in its expressibility. Compared to RNF2/RING2, it does not have the main E3 ubiquitin ligase activity on histone H2A, and it may rather act as a modulator of RNF2/RING2 activity. The chain is E3 ubiquitin-protein ligase RING1 from Rattus norvegicus (Rat).